The sequence spans 152 residues: Nucleoside diphosphate kinase (152 aa).

ATP contacts are provided by lysine 12, phenylalanine 60, arginine 88, threonine 94, arginine 105, and asparagine 115. Histidine 118 functions as the Pros-phosphohistidine intermediate in the catalytic mechanism.

It belongs to the NDK family. As to quaternary structure, homotrimer. The cofactor is Mg(2+).

The enzyme catalyses a 2'-deoxyribonucleoside 5'-diphosphate + ATP = a 2'-deoxyribonucleoside 5'-triphosphate + ADP. The catalysed reaction is a ribonucleoside 5'-diphosphate + ATP = a ribonucleoside 5'-triphosphate + ADP. Functionally, major role in the synthesis of nucleoside triphosphates other than ATP. The ATP gamma phosphate is transferred to the NDP beta phosphate via a ping-pong mechanism, using a phosphorylated active-site intermediate. The protein is Nucleoside diphosphate kinase (ndk-1) of Neurospora crassa (strain ATCC 24698 / 74-OR23-1A / CBS 708.71 / DSM 1257 / FGSC 987).